A 442-amino-acid polypeptide reads, in one-letter code: UBX domain-containing protein 6 (442 aa).

The tract at residues 1-10 is mediates interaction with LMAN1; sequence MKKFFQEIKA. Residues 13 to 111 form a disordered region; the sequence is KFKSAGPGQK…TNSVPEPKEE (99 aa). Ser-36 is subject to Phosphoserine. The tract at residues 51–63 is VCP/p97-interacting motif (VIM); it reads EAQMAAAAALARL. Residues 52–61 are compositionally biased toward low complexity; sequence AQMAAAAALA. The segment covering 90 to 105 has biased composition (polar residues); it reads EATSSNNPGAPGTNSV. The region spanning 175-244 is the PUB domain; that stretch reads VDTIAKYLDN…GQEEFYVLGE (70 aa). The 77-residue stretch at 332-408 folds into the UBX domain; the sequence is RKYTYALVRV…GLVPSALLTF (77 aa).

In terms of assembly, interacts with VCP through the PUB domain (via C-terminus) and VIM motif (via N-terminus); the interaction is direct. Forms a ternary complex with CAV1 and VCP. Interacts with SYVN1. Interacts with HERPUD1. Interacts with VCPKMT. May interact with DERL1. Interacts with PLAA, VCP and YOD1; may form a complex involved in macroautophagy. Interacts with LMAN1. In terms of tissue distribution, widely expressed (at protein level). Highest expression in brain (at protein level).

The protein resides in the cytoplasm. Its subcellular location is the cytosol. The protein localises to the membrane. It is found in the nucleus. It localises to the cytoskeleton. The protein resides in the microtubule organizing center. Its subcellular location is the centrosome. The protein localises to the early endosome membrane. It is found in the late endosome membrane. It localises to the lysosome membrane. May negatively regulate the ATPase activity of VCP, an ATP-driven segregase that associates with different cofactors to control a wide variety of cellular processes. As a cofactor of VCP, it may play a role in the transport of CAV1 to lysosomes for degradation. It may also play a role in endoplasmic reticulum-associated degradation (ERAD) of misfolded proteins. Together with VCP and other cofactors, it may play a role in macroautophagy, regulating for instance the clearance of damaged lysosomes. The chain is UBX domain-containing protein 6 from Mus musculus (Mouse).